A 546-amino-acid chain; its full sequence is CTP synthase (546 aa).

An amidoligase domain region spans residues 1–266 (MARYIFITGG…DTEVLDVFGL (266 aa)). Serine 13 is a CTP binding site. Residue serine 13 coordinates UTP. 14 to 19 (SLGKGL) contacts ATP. Tyrosine 54 provides a ligand contact to L-glutamine. Aspartate 71 is a binding site for ATP. 2 residues coordinate Mg(2+): aspartate 71 and glutamate 140. Residues 147-149 (DIE), 187-192 (KTKPTQ), and lysine 223 contribute to the CTP site. UTP contacts are provided by residues 187 to 192 (KTKPTQ) and lysine 223. A Glutamine amidotransferase type-1 domain is found at 293-545 (NIAIVGKYTG…IGAAKERSRL (253 aa)). An L-glutamine-binding site is contributed by alanine 357. Catalysis depends on cysteine 384, which acts as the Nucleophile; for glutamine hydrolysis. Residues 385–388 (FGMQ), glutamate 408, and arginine 473 each bind L-glutamine. Residues histidine 518 and glutamate 520 contribute to the active site.

Belongs to the CTP synthase family. In terms of assembly, homotetramer.

It carries out the reaction UTP + L-glutamine + ATP + H2O = CTP + L-glutamate + ADP + phosphate + 2 H(+). It catalyses the reaction L-glutamine + H2O = L-glutamate + NH4(+). The enzyme catalyses UTP + NH4(+) + ATP = CTP + ADP + phosphate + 2 H(+). It participates in pyrimidine metabolism; CTP biosynthesis via de novo pathway; CTP from UDP: step 2/2. Its activity is regulated as follows. Allosterically activated by GTP, when glutamine is the substrate; GTP has no effect on the reaction when ammonia is the substrate. The allosteric effector GTP functions by stabilizing the protein conformation that binds the tetrahedral intermediate(s) formed during glutamine hydrolysis. Inhibited by the product CTP, via allosteric rather than competitive inhibition. Its function is as follows. Catalyzes the ATP-dependent amination of UTP to CTP with either L-glutamine or ammonia as the source of nitrogen. Regulates intracellular CTP levels through interactions with the four ribonucleotide triphosphates. This is CTP synthase from Phenylobacterium zucineum (strain HLK1).